A 426-amino-acid chain; its full sequence is Probable histidine--tRNA ligase (426 aa).

It belongs to the class-II aminoacyl-tRNA synthetase family. In terms of assembly, homodimer.

The protein resides in the cytoplasm. The enzyme catalyses tRNA(His) + L-histidine + ATP = L-histidyl-tRNA(His) + AMP + diphosphate + H(+). This is Probable histidine--tRNA ligase (hisS) from Tropheryma whipplei (strain TW08/27) (Whipple's bacillus).